Consider the following 203-residue polypeptide: Early nodulin-like protein 9 (203 aa).

The N-terminal stretch at 1–27 (MARNLKSMMLCGFGLLCFLMIVDRAYA) is a signal peptide. Residues 28 to 130 (REFTVGGATG…NEKLVVIVMA (103 aa)) enclose the Phytocyanin domain. A disulfide bridge connects residues Cys-84 and Cys-118. Asn-103 is a glycosylation site (N-linked (GlcNAc...) asparagine). The disordered stretch occupies residues 134-181 (GNKNTASSPPSPAPAPSGESAPSPPVSGTFEMTPAPTPTTSEDTPNSA). A lipid anchor (GPI-anchor amidated serine) is attached at Ser-180. The propeptide at 181 to 203 (AASSLSFVAALLGAALASTLFLH) is removed in mature form.

It belongs to the early nodulin-like (ENODL) family. In terms of tissue distribution, specifically observed at the plasma membrane of sieve elements in vascular tissues of leaves, stems, roots, flowers and reproductive organs. Absent from companion cells.

It is found in the cell membrane. Its function is as follows. May act as a carbohydrate transporter. Mainly required for reproductive functions. The sequence is that of Early nodulin-like protein 9 from Arabidopsis thaliana (Mouse-ear cress).